The chain runs to 486 residues: UDP-N-acetylmuramate--L-alanine ligase (486 aa).

132–138 (GTHGKTT) contributes to the ATP binding site.

Belongs to the MurCDEF family.

It localises to the cytoplasm. The enzyme catalyses UDP-N-acetyl-alpha-D-muramate + L-alanine + ATP = UDP-N-acetyl-alpha-D-muramoyl-L-alanine + ADP + phosphate + H(+). The protein operates within cell wall biogenesis; peptidoglycan biosynthesis. In terms of biological role, cell wall formation. The sequence is that of UDP-N-acetylmuramate--L-alanine ligase from Halorhodospira halophila (strain DSM 244 / SL1) (Ectothiorhodospira halophila (strain DSM 244 / SL1)).